The primary structure comprises 940 residues: Isoleucine--tRNA ligase (940 aa).

The 'HIGH' region signature appears at 58-68; the sequence is PYANGSIHIGH. Position 564 (Glu564) interacts with L-isoleucyl-5'-AMP. A 'KMSKS' region motif is present at residues 605–609; the sequence is KMSKS. Lys608 is an ATP binding site. 4 residues coordinate Zn(2+): Cys903, Cys906, Cys923, and Cys926.

This sequence belongs to the class-I aminoacyl-tRNA synthetase family. IleS type 1 subfamily. In terms of assembly, monomer. It depends on Zn(2+) as a cofactor.

Its subcellular location is the cytoplasm. The enzyme catalyses tRNA(Ile) + L-isoleucine + ATP = L-isoleucyl-tRNA(Ile) + AMP + diphosphate. Its function is as follows. Catalyzes the attachment of isoleucine to tRNA(Ile). As IleRS can inadvertently accommodate and process structurally similar amino acids such as valine, to avoid such errors it has two additional distinct tRNA(Ile)-dependent editing activities. One activity is designated as 'pretransfer' editing and involves the hydrolysis of activated Val-AMP. The other activity is designated 'posttransfer' editing and involves deacylation of mischarged Val-tRNA(Ile). The protein is Isoleucine--tRNA ligase of Shewanella amazonensis (strain ATCC BAA-1098 / SB2B).